The chain runs to 529 residues: Peptide chain release factor 3 (529 aa).

The tr-type G domain maps to 11 to 280 (AKRRTFAIIS…GLVAWAPAPM (270 aa)). GTP contacts are provided by residues 20 to 27 (SHPDAGKT), 88 to 92 (DTPGH), and 142 to 145 (NKLD).

This sequence belongs to the TRAFAC class translation factor GTPase superfamily. Classic translation factor GTPase family. PrfC subfamily.

It is found in the cytoplasm. Functionally, increases the formation of ribosomal termination complexes and stimulates activities of RF-1 and RF-2. It binds guanine nucleotides and has strong preference for UGA stop codons. It may interact directly with the ribosome. The stimulation of RF-1 and RF-2 is significantly reduced by GTP and GDP, but not by GMP. This is Peptide chain release factor 3 from Salmonella gallinarum (strain 287/91 / NCTC 13346).